The following is a 600-amino-acid chain: Aspartate--tRNA(Asp/Asn) ligase (600 aa).

An L-aspartate-binding site is contributed by Glu-174. Positions 198-201 (QLFK) are aspartate. Arg-220 contributes to the L-aspartate binding site. Residues 220–222 (RDE) and Gln-229 each bind ATP. Residue His-457 coordinates L-aspartate. Position 491 (Glu-491) interacts with ATP. Arg-498 serves as a coordination point for L-aspartate. 543–546 (GLDR) is a binding site for ATP.

The protein belongs to the class-II aminoacyl-tRNA synthetase family. Type 1 subfamily. Homodimer.

It localises to the cytoplasm. The catalysed reaction is tRNA(Asx) + L-aspartate + ATP = L-aspartyl-tRNA(Asx) + AMP + diphosphate. Aspartyl-tRNA synthetase with relaxed tRNA specificity since it is able to aspartylate not only its cognate tRNA(Asp) but also tRNA(Asn). Reaction proceeds in two steps: L-aspartate is first activated by ATP to form Asp-AMP and then transferred to the acceptor end of tRNA(Asp/Asn). The chain is Aspartate--tRNA(Asp/Asn) ligase from Burkholderia ambifaria (strain ATCC BAA-244 / DSM 16087 / CCUG 44356 / LMG 19182 / AMMD) (Burkholderia cepacia (strain AMMD)).